The sequence spans 76 residues: UPF0291 protein BPUM_1689 (76 aa).

Disordered regions lie at residues 1–31 (MISK…TEQK) and 56–76 (DPEG…QNLH). Composition is skewed to basic and acidic residues over residues 12–31 (ELSK…TEQK) and 63–76 (TPEK…QNLH).

The protein belongs to the UPF0291 family.

It localises to the cytoplasm. This is UPF0291 protein BPUM_1689 from Bacillus pumilus (strain SAFR-032).